A 318-amino-acid chain; its full sequence is MLSDFYKYATSTQLDLICTQLINLSTHVFNTNNGNIPKWEQAIKQIKTQNTGSLDFITPYLNISAHHINNFTLEKSLKQLIPWRKGPYQIGDLQLDSEWRGDMKWHRLIPHIKPLKDKVVLDVGSGNGYFTYLMAISGAKIALGIEPFLLFNYQFQAIRTLINNLPNVFVLPLSLDKIPKKPLFDTVFSMGVLYHQKDYELHLNQLKDVMKPSGELILETLIIDLEKVKKIIPKGRYAKMRNVYCLPSKNTLRTWLEDAEFKNIKLLDVTKTTSKEQRATHWIGNNTQSLKNFLDPNNRDLTIEGFPAPKRAIFICQK.

Carboxy-S-adenosyl-L-methionine-binding positions include lysine 85, tryptophan 99, lysine 104, glycine 124, 175–176, methionine 190, tyrosine 194, and arginine 311; that span reads LD.

Belongs to the class I-like SAM-binding methyltransferase superfamily. CmoB family. Homotetramer.

The enzyme catalyses carboxy-S-adenosyl-L-methionine + 5-hydroxyuridine(34) in tRNA = 5-carboxymethoxyuridine(34) in tRNA + S-adenosyl-L-homocysteine + H(+). In terms of biological role, catalyzes carboxymethyl transfer from carboxy-S-adenosyl-L-methionine (Cx-SAM) to 5-hydroxyuridine (ho5U) to form 5-carboxymethoxyuridine (cmo5U) at position 34 in tRNAs. This Ruthia magnifica subsp. Calyptogena magnifica protein is tRNA U34 carboxymethyltransferase.